Reading from the N-terminus, the 418-residue chain is Zinc finger protein 566 (418 aa).

The KRAB domain maps to 6 to 77 (VMFSDVSVDF…DRELTRGQWP (72 aa)). A C2H2-type 1; degenerate zinc finger spans residues 169 to 193 (KFCASKEYRKTFRHGSQFATHEIIH). 7 C2H2-type zinc fingers span residues 199–221 (YECK…QKIH), 227–249 (FECK…HRIH), 255–277 (YECK…QRIH), 283–305 (YECK…QRIH), 311–333 (YECK…QRIH), 339–361 (YECK…QRIH), and 367–389 (YECK…HRIH). Glycyl lysine isopeptide (Lys-Gly) (interchain with G-Cter in SUMO2) cross-links involve residues Lys314 and Lys328.

Belongs to the krueppel C2H2-type zinc-finger protein family.

It localises to the nucleus. Its function is as follows. May be involved in transcriptional regulation. This chain is Zinc finger protein 566 (ZNF566), found in Pan troglodytes (Chimpanzee).